The sequence spans 259 residues: MASSSHRYFALLALFAVSLKFCYCQNETTDGAGWGTAGVTWYGEPLGAGSTGGACGFAVANPPLYGMVSAGGPSVFNNGIGCGTCFQILCNGHPACSRRPITVTITDECPGGPCASEPAHFDLSGKAMGALARPGQGDRLRSAGVLRVYYIRVECLYRRTNIAFRMDPGANPYYISFVVEYENGDGDLAYTEIQPAGGTFIPMQEMRSAVWKVNSGSPLTGPFNIRLTSAESHNVVVAYNVIPANWKPNETYRSVVNFK.

Positions 1 to 24 (MASSSHRYFALLALFAVSLKFCYC) are cleaved as a signal peptide. Asn-26 is a glycosylation site (N-linked (GlcNAc...) asparagine). Residues 52-160 (GGACGFAVAN…IRVECLYRRT (109 aa)) form the Expansin-like EG45 domain. Intrachain disulfides connect Cys-55-Cys-82, Cys-85-Cys-155, and Cys-90-Cys-96. The region spanning 173 to 254 (YYISFVVEYE…NWKPNETYRS (82 aa)) is the Expansin-like CBD domain. A glycan (N-linked (GlcNAc...) asparagine) is linked at Asn-249.

Belongs to the expansin family. Expansin B subfamily.

It localises to the secreted. The protein resides in the cell wall. Its subcellular location is the membrane. May cause loosening and extension of plant cell walls by disrupting non-covalent bonding between cellulose microfibrils and matrix glucans. This chain is Expansin-B6, found in Arabidopsis thaliana (Mouse-ear cress).